Consider the following 465-residue polypeptide: Amino-acid carrier protein AlsT (465 aa).

Transmembrane regions (helical) follow at residues 20–40 (LFYI…FIQF), 82–102 (VALA…VVAA), 142–162 (WLGI…FNAV), 177–197 (VNKI…IFGG), 208–228 (IVPV…ITNI), 241–261 (NALG…VIGA), 296–316 (LGVF…ILLY), 336–356 (IGGW…FSSV), 382–402 (IAVI…VWDM), and 405–425 (LFMG…SNVA).

Belongs to the alanine or glycine:cation symporter (AGCS) (TC 2.A.25) family.

It localises to the cell membrane. This is Amino-acid carrier protein AlsT (alsT) from Bacillus subtilis (strain 168).